The following is a 148-amino-acid chain: Large ribosomal subunit protein bL27m (148 aa).

Residues 1–30 constitute a mitochondrion transit peptide; it reads MALAVLAWRTRTAVIALLSPPQAAALAVRY.

The protein belongs to the bacterial ribosomal protein bL27 family. In terms of assembly, component of the mitochondrial ribosome large subunit (39S) which comprises a 16S rRNA and about 50 distinct proteins.

The protein resides in the mitochondrion. This Bos taurus (Bovine) protein is Large ribosomal subunit protein bL27m (MRPL27).